A 548-amino-acid chain; its full sequence is Probable malate:quinone oxidoreductase (548 aa).

It belongs to the MQO family. It depends on FAD as a cofactor.

The catalysed reaction is (S)-malate + a quinone = a quinol + oxaloacetate. Its pathway is carbohydrate metabolism; tricarboxylic acid cycle; oxaloacetate from (S)-malate (quinone route): step 1/1. This is Probable malate:quinone oxidoreductase from Escherichia coli O6:H1 (strain CFT073 / ATCC 700928 / UPEC).